Here is a 175-residue protein sequence, read N- to C-terminus: Orotate phosphoribosyltransferase (175 aa).

5-phospho-alpha-D-ribose 1-diphosphate-binding positions include Arg88, Lys89, Lys92, and 114 to 122 (EDVVTTARG). Orotate-binding residues include Thr118 and Arg146.

Belongs to the purine/pyrimidine phosphoribosyltransferase family. PyrE subfamily. As to quaternary structure, homodimer. Mg(2+) serves as cofactor.

The catalysed reaction is orotidine 5'-phosphate + diphosphate = orotate + 5-phospho-alpha-D-ribose 1-diphosphate. It functions in the pathway pyrimidine metabolism; UMP biosynthesis via de novo pathway; UMP from orotate: step 1/2. Its function is as follows. Catalyzes the transfer of a ribosyl phosphate group from 5-phosphoribose 1-diphosphate to orotate, leading to the formation of orotidine monophosphate (OMP). The polypeptide is Orotate phosphoribosyltransferase (Methanocella arvoryzae (strain DSM 22066 / NBRC 105507 / MRE50)).